The sequence spans 43 residues: Iota-conotoxin-like Fi11.6 (43 aa).

4 disulfides stabilise this stretch: cysteine 2-cysteine 16, cysteine 9-cysteine 19, cysteine 15-cysteine 24, and cysteine 18-cysteine 35. Proline 8 carries the 4-hydroxyproline modification. A 4-hydroxyproline modification is found at proline 26. Tryptophan 30 is modified (6'-bromotryptophan). D-phenylalanine is present on phenylalanine 41.

The protein belongs to the conotoxin I1 superfamily. Expressed by the venom duct.

It is found in the secreted. In terms of biological role, iota-conotoxins bind to voltage-gated sodium channels (Nav) and act as agonists by shifting the voltage-dependence of activation to more hyperpolarized levels. Produces general excitatory symptoms. This Conus figulinus (Fig cone) protein is Iota-conotoxin-like Fi11.6.